Here is a 436-residue protein sequence, read N- to C-terminus: MTSIPIFESVSRFLPPANEDVQFWWKVTGRHMACMMHEAGYPEYRQVECLLFHRFKVIPCLGPRPHSDTPWYKSRVGGGAADGCPINYSWRFGTIERKPHIRNFIEPLGALTKTPADPLNEVATKALLQDYSMTLPNVDLEAFWTFAPHYRPRIIEKEDMEKLAGASLLVGAEMSPDSRTIDIKAYMYPRVPSQTSQLLTTILPQAMRDTYGEDVCLDSLNFVHDFMTNDPQGSQLALTGTTGIDCCKLQETRVKIYVITRNTSFDHIAAIMTLGGRRSISGELLGQLKALWYELKGAPAELPSSEQLPVQTKPDGSRNPIVVPFYFDIQPRLALPDVKAYIDVSTSPVSDLAAAKAVVRHLEQHGSGQNPKAYLNVLKDITPVEELETQKGALAFYSVAVKKNELDITSYFNPQVYKRYFAHEVQLNGQRRSVFE.

Belongs to the tryptophan dimethylallyltransferase family.

It functions in the pathway secondary metabolite biosynthesis. Prenyltransferase; part of the gene cluster that mediates the biosynthesis of neosartoricin B, a prenylated anthracenone that probably exhibits T-cell antiproliferative activity, suggestive of a physiological role as an immunosuppressive agent. The non-reducing polyketide synthase nscA probably synthesizes and cyclizes the decaketide backbone. The hydrolase nscB then mediates the product release through hydrolysis followed by spontaneous decarboxylation. The prenyltransferase nscD catalyzes the addition of the dimethylallyl group to the aromatic C5. The FAD-dependent monooxygenase nscC is then responsible for the stereospecific hydroxylation at C2. Neosartoricin B can be converted into two additional compounds neosartoricins C and D. Neosartoricin C is a spirocyclic compound that is cyclized through the attack of C3 hydroxyl on C14, followed by dehydration. On the other hand, neosartoricin D is a further cyclized compound in which attack of C2 on C14 in neosartoricin C results in the formation of the acetal-containing dioxabicyclo-octanone ring. Both of these compounds are novel and possibly represent related metabolites of the gene cluster. The protein is Prenyltransferase nscD of Trichophyton rubrum (strain ATCC MYA-4607 / CBS 118892) (Athlete's foot fungus).